The chain runs to 511 residues: Maturase K (511 aa).

It belongs to the intron maturase 2 family. MatK subfamily.

It is found in the plastid. The protein resides in the chloroplast. Usually encoded in the trnK tRNA gene intron. Probably assists in splicing its own and other chloroplast group II introns. This chain is Maturase K, found in Hordeum bulbosum (Bulbous barley).